A 316-amino-acid polypeptide reads, in one-letter code: Transaldolase (316 aa).

The active-site Schiff-base intermediate with substrate is the K131.

It belongs to the transaldolase family. Type 1 subfamily. In terms of assembly, homodimer.

The protein resides in the cytoplasm. It carries out the reaction D-sedoheptulose 7-phosphate + D-glyceraldehyde 3-phosphate = D-erythrose 4-phosphate + beta-D-fructose 6-phosphate. Its pathway is carbohydrate degradation; pentose phosphate pathway; D-glyceraldehyde 3-phosphate and beta-D-fructose 6-phosphate from D-ribose 5-phosphate and D-xylulose 5-phosphate (non-oxidative stage): step 2/3. Transaldolase is important for the balance of metabolites in the pentose-phosphate pathway. In Sodalis glossinidius (strain morsitans), this protein is Transaldolase.